Here is a 216-residue protein sequence, read N- to C-terminus: Ras-related protein Rab-11A (216 aa).

Gly-2 carries the N-acetylglycine modification. Positions 20, 21, 22, 23, 24, 25, 26, 37, 38, 40, 42, and 43 each coordinate GTP. Position 25 (Ser-25) interacts with Mg(2+). A Switch 1 motif is present at residues 36–47 (FNLESKSTIGVE). Residues Thr-43 and Asp-66 each contribute to the Mg(2+) site. The Switch 2 signature appears at 67-86 (TAGQERYRAITSAYYRGAVG). Positions 69, 124, 125, 127, 155, and 156 each coordinate GTP. The segment at 183–211 (DRRENDMSPSNNVVPIHVPPTTENKPKVQ) is disordered. S-geranylgeranyl cysteine attachment occurs at residues Cys-212 and Cys-213. Cys-213 carries the post-translational modification Cysteine methyl ester. Positions 214–216 (QNI) are cleaved as a propeptide — removed in mature form.

Belongs to the small GTPase superfamily. Rab family. In terms of assembly, interacts (GTP-bound form) with RAB11FIPs (via their C-termini) including RAB11FIP1, RAB11FIP2, RAB11FIP3, RAB11FIP4 and RAB11FIP5 effectors. Forms a complex with RAB11FIP3 and dynein intermediate chain DYNC1LI1; the interaction between RAB11A1 and RAB11FIP3 is direct; the complex regulates endocytic trafficking. Interacts with EVI5; EVI5 and RAB11FIP3 may be mutually exclusive and compete for binding RAB11A. Interacts with SGSM1, SGSM2, SGSM3 and VIPAS39. Interacts with EXOC6 in a GTP-dependent manner. Interacts with RAB11FIP5. Interacts with STXBP6. Interacts (GDP-bound form) with ZFYVE27. Interacts with BIRC6/bruce. May interact with TBC1D14. Interacts with UNC119; in a cell cycle-dependent manner. GDP-bound and nucleotide-free forms interact with SH3BP5. Interacts (GDP-bound form) with KIF5A in a ZFYVE27-dependent manner. Interacts (GDP-bound form) with RELCH. Found in a complex composed of RELCH, OSBP1 and RAB11A. Interacts with TBC1D12. Interacts with DEF6. Interacts with ATP9A. Forms a heterotetramer with RAB11FIP3; the GTP-bound form is preferred for binding. Forms a complex with Rabin8/RAB3IP and RAB11FIP3, probably a heterohexamer with two of each protein subunit, where Rabin8/RAB3IP and RAB11FIP3 simultaneously bind to RAB11A; the complex promotes preciliary trafficking and cilia growth. Forms a complex containing RAB11A, ASAP1, Rabin8/RAB3IP, RAP11FIP3 and ARF4; the complex promotes preciliary trafficking; the complex binds to RHO in photoreceptor cells and promotes RHO ciliary transport. Interacts (GTP-bound form) with WDR44; the interaction prevents RAB11A-RAB3IP-RAB11FIP3 complex formation. The cofactor is Mg(2+). As to expression, detected in various tissues, such as brain, testis, spleen, and heart.

The protein localises to the cell membrane. It localises to the endosome membrane. The protein resides in the recycling endosome membrane. It is found in the cleavage furrow. Its subcellular location is the cytoplasmic vesicle. The protein localises to the phagosome. It localises to the cytoplasmic vesicle membrane. The protein resides in the golgi apparatus. It is found in the trans-Golgi network. The catalysed reaction is GTP + H2O = GDP + phosphate + H(+). Regulated by guanine nucleotide exchange factors (GEFs) which promote the exchange of bound GDP for free GTP. Regulated by GTPase activating proteins (GAPs) which increase the GTP hydrolysis activity. Inhibited by GDP dissociation inhibitors (GDIs) which prevent Rab-GDP dissociation. Functionally, the small GTPases Rab are key regulators of intracellular membrane trafficking, from the formation of transport vesicles to their fusion with membranes. Rabs cycle between an inactive GDP-bound form and an active GTP-bound form that is able to recruit to membranes different set of downstream effectors directly responsible for vesicle formation, movement, tethering and fusion. The small Rab GTPase RAB11A regulates endocytic recycling. Forms a functional Rab11/RAB11FIP3/dynein complex that regulates the movement of peripheral sorting endosomes (SE) along microtubule tracks toward the microtubule organizing center/centrosome, generating the endosomal recycling compartment (ERC). Acts as a major regulator of membrane delivery during cytokinesis. Together with MYO5B and RAB8A participates in epithelial cell polarization. Together with Rabin8/RAB3IP, RAB8A, the exocyst complex, PARD3, PRKCI, ANXA2, CDC42 and DNMBP promotes transcytosis of PODXL to the apical membrane initiation sites (AMIS), apical surface formation and lumenogenesis. Together with MYO5B participates in CFTR trafficking to the plasma membrane and TF (Transferrin) recycling in nonpolarized cells. Required in a complex with MYO5B and RAB11FIP2 for the transport of NPC1L1 to the plasma membrane. Participates in the sorting and basolateral transport of CDH1 from the Golgi apparatus to the plasma membrane. Regulates the recycling of FCGRT (receptor of Fc region of monomeric IgG) to basolateral membranes. May also play a role in melanosome transport and release from melanocytes. Promotes Rabin8/RAB3IP preciliary vesicular trafficking to mother centriole by forming a ciliary targeting complex containing Rab11, ASAP1, Rabin8/RAB3IP, RAB11FIP3 and ARF4, thereby regulating ciliogenesis initiation. On the contrary, upon LPAR1 receptor signaling pathway activation, interaction with phosphorylated WDR44 prevents Rab11-RAB3IP-RAB11FIP3 complex formation and cilia growth. Participates in the export of a subset of neosynthesized proteins through a Rab8-Rab10-Rab11-endososomal dependent export route via interaction with WDR44. The chain is Ras-related protein Rab-11A from Rattus norvegicus (Rat).